The primary structure comprises 273 residues: Putative phosphoenolpyruvate synthase regulatory protein (273 aa).

An ADP-binding site is contributed by 153–160 (GVSRSGKT).

The protein belongs to the pyruvate, phosphate/water dikinase regulatory protein family. PSRP subfamily.

It catalyses the reaction [pyruvate, water dikinase] + ADP = [pyruvate, water dikinase]-phosphate + AMP + H(+). It carries out the reaction [pyruvate, water dikinase]-phosphate + phosphate + H(+) = [pyruvate, water dikinase] + diphosphate. Functionally, bifunctional serine/threonine kinase and phosphorylase involved in the regulation of the phosphoenolpyruvate synthase (PEPS) by catalyzing its phosphorylation/dephosphorylation. This is Putative phosphoenolpyruvate synthase regulatory protein from Paracidovorax citrulli (strain AAC00-1) (Acidovorax citrulli).